A 209-amino-acid chain; its full sequence is Uracil phosphoribosyltransferase (209 aa).

Residues arginine 79, arginine 104, and 131–139 each bind 5-phospho-alpha-D-ribose 1-diphosphate; that span reads DPMLATGGS. Residues isoleucine 194 and 199–201 contribute to the uracil site; that span reads GDA. Position 200 (aspartate 200) interacts with 5-phospho-alpha-D-ribose 1-diphosphate.

It belongs to the UPRTase family. Mg(2+) is required as a cofactor.

It carries out the reaction UMP + diphosphate = 5-phospho-alpha-D-ribose 1-diphosphate + uracil. Its pathway is pyrimidine metabolism; UMP biosynthesis via salvage pathway; UMP from uracil: step 1/1. Its activity is regulated as follows. Allosterically activated by GTP. Its function is as follows. Catalyzes the conversion of uracil and 5-phospho-alpha-D-ribose 1-diphosphate (PRPP) to UMP and diphosphate. The sequence is that of Uracil phosphoribosyltransferase from Citrifermentans bemidjiense (strain ATCC BAA-1014 / DSM 16622 / JCM 12645 / Bem) (Geobacter bemidjiensis).